We begin with the raw amino-acid sequence, 409 residues long: Pleckstrin homology domain-containing family O member 1 (409 aa).

The segment at 1–24 (MMKKNNSAKRGPQDGNQQPAPPEK) is disordered. The PH domain maps to 21–132 (PPEKVGWVRK…WINALNSAIT (112 aa)). An interaction with capping proteins (CPs) region spans residues 133 to 193 (RAKNRILDEV…MLTLDLIQEE (61 aa)). The segment at 136–308 (NRILDEVTVE…LPNPGQLSRI (173 aa)) is interaction with ATM, CKIP, IFP35 and NMI. The segment at 218-267 (LAGSRRRADSDRIQPSADRASSLSRPWEKTDKGATYTPQAPKKLTPTEKG) is disordered. Phosphoserine occurs at positions 227 and 271. The tract at residues 308–409 (IQDLVARKLE…PHSQYRKSLM (102 aa)) is negative regulator of AP-1 activity. Disordered stretches follow at residues 325–350 (EVQG…ESEQ) and 390–409 (TPDS…KSLM). Over residues 331–340 (DGKRKAKDPP) the composition is skewed to basic and acidic residues. Residue Ser342 is modified to Phosphoserine. Positions 390–402 (TPDSHLRQTTPHS) are enriched in polar residues.

In terms of assembly, heterodimer or homodimer. Interacts with CK2 and actin capping subunits (capping protein CP-alpha and CP-beta). CKIP1 and CK2 together inhibit the activity of actin capping protein at the barbed ends of actin filaments. Interacts with ATM, IFP35, JUN, JUND, NMI and PI3K. Interacts with AKT1, AKT2 and AKT3 (each isozyme of PKB), PtdIns(3,5)P2, PtdIns(4,5)P2 and PtdIns(3,4,5)P2. Post-translationally, C-terminal fragments could be released during apoptosis via caspase-3-dependent cleavage. Abundantly expressed in skeletal muscle and heart, moderately in kidney, liver, brain and placenta and sparingly in the pancreas and lung. Easily detectable in cell lines such as MOLT-4, HEK293 and Jurkat.

The protein localises to the cell membrane. It is found in the nucleus. It localises to the cytoplasm. In terms of biological role, plays a role in the regulation of the actin cytoskeleton through its interactions with actin capping protein (CP). May function to target CK2 to the plasma membrane thereby serving as an adapter to facilitate the phosphorylation of CP by protein kinase 2 (CK2). Appears to target ATM to the plasma membrane. Appears to also inhibit tumor cell growth by inhibiting AKT-mediated cell-survival. Also implicated in PI3K-regulated muscle differentiation, the regulation of AP-1 activity (plasma membrane bound AP-1 regulator that translocates to the nucleus) and the promotion of apoptosis induced by tumor necrosis factor TNF. When bound to PKB, it inhibits it probably by decreasing PKB level of phosphorylation. In Homo sapiens (Human), this protein is Pleckstrin homology domain-containing family O member 1 (PLEKHO1).